The following is a 341-amino-acid chain: Glucokinase (341 aa).

Glycine 18–threonine 23 contributes to the ATP binding site.

Belongs to the bacterial glucokinase family.

The protein resides in the cytoplasm. It carries out the reaction D-glucose + ATP = D-glucose 6-phosphate + ADP + H(+). In Mesorhizobium japonicum (strain LMG 29417 / CECT 9101 / MAFF 303099) (Mesorhizobium loti (strain MAFF 303099)), this protein is Glucokinase.